Reading from the N-terminus, the 147-residue chain is Large ribosomal subunit protein uL13 (147 aa).

This sequence belongs to the universal ribosomal protein uL13 family. Part of the 50S ribosomal subunit.

Functionally, this protein is one of the early assembly proteins of the 50S ribosomal subunit, although it is not seen to bind rRNA by itself. It is important during the early stages of 50S assembly. The chain is Large ribosomal subunit protein uL13 from Rhodococcus erythropolis (strain PR4 / NBRC 100887).